A 222-amino-acid polypeptide reads, in one-letter code: Ras-related protein Rab-41 (222 aa).

Residues serine 41, valine 42, glycine 43, lysine 44, threonine 45, serine 46, and threonine 63 each contribute to the GTP site. Threonine 45 contributes to the Mg(2+) binding site. The tract at residues 58–66 is switch-I; the sequence is CACQATVGI. Positions 63 and 86 each coordinate Mg(2+). GTP-binding residues include glycine 89, asparagine 144, lysine 145, aspartate 147, serine 174, alanine 175, and lysine 176. The switch-II stretch occupies residues 89-105; the sequence is GQERFHSLIPSYIRDST. Residue cysteine 222 is the site of S-geranylgeranyl cysteine attachment.

This sequence belongs to the small GTPase superfamily. Rab family. Mg(2+) is required as a cofactor. As to expression, widely expressed in brain, testis, lung, heart, ovary, colon, kidney, uterus and spleen but not in liver.

The protein resides in the cytoplasm. It carries out the reaction GTP + H2O = GDP + phosphate + H(+). Its activity is regulated as follows. Regulated by guanine nucleotide exchange factors (GEFs) which promote the exchange of bound GDP for free GTP. Regulated by GTPase activating proteins (GAPs) which increase the GTP hydrolysis activity. Inhibited by GDP dissociation inhibitors (GDIs). Its function is as follows. The small GTPases Rab are key regulators of intracellular membrane trafficking, from the formation of transport vesicles to their fusion with membranes. Rabs cycle between an inactive GDP-bound form and an active GTP-bound form that is able to recruit to membranes different sets of downstream effectors directly responsible for vesicle formation, movement, tethering and fusion. RAB41 is required for normal Golgi ribbon organization and ER-to-Golgi trafficking. The sequence is that of Ras-related protein Rab-41 from Homo sapiens (Human).